We begin with the raw amino-acid sequence, 241 residues long: tRNA (guanine-N(1)-)-methyltransferase (241 aa).

S-adenosyl-L-methionine-binding positions include G123 and 143–148 (IGDYVL).

It belongs to the RNA methyltransferase TrmD family. As to quaternary structure, homodimer.

The protein localises to the cytoplasm. It catalyses the reaction guanosine(37) in tRNA + S-adenosyl-L-methionine = N(1)-methylguanosine(37) in tRNA + S-adenosyl-L-homocysteine + H(+). Its function is as follows. Specifically methylates guanosine-37 in various tRNAs. The protein is tRNA (guanine-N(1)-)-methyltransferase of Roseobacter denitrificans (strain ATCC 33942 / OCh 114) (Erythrobacter sp. (strain OCh 114)).